The chain runs to 100 residues: Small ribosomal subunit protein bS20 (100 aa).

The span at 1 to 22 (MASGKPKKKNPRLASGRKRARQ) shows a compositional bias: basic residues. The disordered stretch occupies residues 1 to 26 (MASGKPKKKNPRLASGRKRARQGLKL).

It belongs to the bacterial ribosomal protein bS20 family.

In terms of biological role, binds directly to 16S ribosomal RNA. This chain is Small ribosomal subunit protein bS20, found in Acidovorax ebreus (strain TPSY) (Diaphorobacter sp. (strain TPSY)).